A 1497-amino-acid polypeptide reads, in one-letter code: DNA-directed RNA polymerase subunit beta' (1497 aa).

Zn(2+)-binding residues include Cys67, Cys69, Cys82, and Cys85. 3 residues coordinate Mg(2+): Asp499, Asp501, and Asp503. Zn(2+)-binding residues include Cys867, Cys943, Cys950, and Cys953. A disordered region spans residues 1476–1497 (ESNATERVVEEPATREGFANER). The segment covering 1482 to 1497 (RVVEEPATREGFANER) has biased composition (basic and acidic residues).

This sequence belongs to the RNA polymerase beta' chain family. In terms of assembly, the RNAP catalytic core consists of 2 alpha, 1 beta, 1 beta' and 1 omega subunit. When a sigma factor is associated with the core the holoenzyme is formed, which can initiate transcription. Mg(2+) serves as cofactor. It depends on Zn(2+) as a cofactor.

The enzyme catalyses RNA(n) + a ribonucleoside 5'-triphosphate = RNA(n+1) + diphosphate. DNA-dependent RNA polymerase catalyzes the transcription of DNA into RNA using the four ribonucleoside triphosphates as substrates. The protein is DNA-directed RNA polymerase subunit beta' of Pelodictyon phaeoclathratiforme (strain DSM 5477 / BU-1).